Here is a 461-residue protein sequence, read N- to C-terminus: Bifunctional protein GlmU (461 aa).

Positions 1 to 229 (MNKYVVILAA…FSESLGVNDR (229 aa)) are pyrophosphorylase. UDP-N-acetyl-alpha-D-glucosamine is bound by residues 8-11 (LAAG), K22, Q72, and 77-78 (GT). D102 serves as a coordination point for Mg(2+). Residues G139, E154, N169, and N227 each contribute to the UDP-N-acetyl-alpha-D-glucosamine site. N227 lines the Mg(2+) pocket. Positions 230-250 (IALAQATKIMQRRINEEHMRN) are linker. The interval 251–461 (GVSFIDPDTA…LPLAKDKEWE (211 aa)) is N-acetyltransferase. Residues R332 and K350 each coordinate UDP-N-acetyl-alpha-D-glucosamine. The active-site Proton acceptor is H362. UDP-N-acetyl-alpha-D-glucosamine contacts are provided by Y365 and N376. Acetyl-CoA-binding positions include 385–386 (NY), A422, and R439.

In the N-terminal section; belongs to the N-acetylglucosamine-1-phosphate uridyltransferase family. This sequence in the C-terminal section; belongs to the transferase hexapeptide repeat family. Homotrimer. It depends on Mg(2+) as a cofactor.

The protein localises to the cytoplasm. The catalysed reaction is alpha-D-glucosamine 1-phosphate + acetyl-CoA = N-acetyl-alpha-D-glucosamine 1-phosphate + CoA + H(+). It carries out the reaction N-acetyl-alpha-D-glucosamine 1-phosphate + UTP + H(+) = UDP-N-acetyl-alpha-D-glucosamine + diphosphate. The protein operates within nucleotide-sugar biosynthesis; UDP-N-acetyl-alpha-D-glucosamine biosynthesis; N-acetyl-alpha-D-glucosamine 1-phosphate from alpha-D-glucosamine 6-phosphate (route II): step 2/2. Its pathway is nucleotide-sugar biosynthesis; UDP-N-acetyl-alpha-D-glucosamine biosynthesis; UDP-N-acetyl-alpha-D-glucosamine from N-acetyl-alpha-D-glucosamine 1-phosphate: step 1/1. It participates in bacterial outer membrane biogenesis; LPS lipid A biosynthesis. Functionally, catalyzes the last two sequential reactions in the de novo biosynthetic pathway for UDP-N-acetylglucosamine (UDP-GlcNAc). The C-terminal domain catalyzes the transfer of acetyl group from acetyl coenzyme A to glucosamine-1-phosphate (GlcN-1-P) to produce N-acetylglucosamine-1-phosphate (GlcNAc-1-P), which is converted into UDP-GlcNAc by the transfer of uridine 5-monophosphate (from uridine 5-triphosphate), a reaction catalyzed by the N-terminal domain. The protein is Bifunctional protein GlmU of Lactobacillus johnsonii (strain CNCM I-12250 / La1 / NCC 533).